The following is a 423-amino-acid chain: D-tagatose-1,6-bisphosphate aldolase subunit GatZ (423 aa).

The protein belongs to the GatZ/KbaZ family. GatZ subfamily. In terms of assembly, forms a complex with GatY.

It participates in carbohydrate metabolism; D-tagatose 6-phosphate degradation; D-glyceraldehyde 3-phosphate and glycerone phosphate from D-tagatose 6-phosphate: step 2/2. Its function is as follows. Component of the tagatose-1,6-bisphosphate aldolase GatYZ that is required for full activity and stability of the Y subunit. Could have a chaperone-like function for the proper and stable folding of GatY. When expressed alone, GatZ does not show any aldolase activity. Is involved in the catabolism of galactitol. The sequence is that of D-tagatose-1,6-bisphosphate aldolase subunit GatZ from Klebsiella pneumoniae subsp. pneumoniae (strain ATCC 700721 / MGH 78578).